The primary structure comprises 160 residues: MRCPFCGHADTQVVDSRVSEEGDTIRRRRRCLSCDKRFTTYERVELAMPTVVKRDGSRSEYDAAKLRGSLALALRKRPVSTEEVDGAVARIEDTLLASGAREVASEHIGELVMNELKRLDKVAYVRFASVYKSFEDIGEFVEAIREMQGPRLGAGKLRKE.

Residues 3–34 (CPFCGHADTQVVDSRVSEEGDTIRRRRRCLSC) fold into a zinc finger. The region spanning 49-139 (PTVVKRDGSR…VYKSFEDIGE (91 aa)) is the ATP-cone domain.

The protein belongs to the NrdR family. Requires Zn(2+) as cofactor.

Negatively regulates transcription of bacterial ribonucleotide reductase nrd genes and operons by binding to NrdR-boxes. This chain is Transcriptional repressor NrdR, found in Bordetella avium (strain 197N).